The chain runs to 76 residues: Signal recognition particle 9 kDa protein (76 aa).

The protein belongs to the SRP9 family. As to quaternary structure, heterodimer with SRP14; binds RNA as heterodimer. Component of a signal recognition particle complex that consists of a 7SL RNA molecule of 300 nucleotides and six protein subunits: srpa-72, srpa-68, SRP54, F37F2.2/SRP19, F25G6.8/SRP14 and ZK512.4/SRP9.

It localises to the cytoplasm. Its function is as follows. Component of the signal recognition particle (SRP) complex, a ribonucleoprotein complex that mediates the cotranslational targeting of secretory and membrane proteins to the endoplasmic reticulum (ER). SRP9 together with SRP14 and the Alu portion of the SRP RNA, constitutes the elongation arrest domain of SRP. The complex of SRP9 and SRP14 is required for SRP RNA binding. The sequence is that of Signal recognition particle 9 kDa protein from Caenorhabditis elegans.